A 278-amino-acid polypeptide reads, in one-letter code: MAPVGDKKAKKGILERLNSGEVVIGDGGFVFALEKRGYVKAGPWTPEAAVEHPEAVRQLHREFLRAGSNVMQTFTFYASEDKLENRGNYVAEKISGQKVNEAACDIARQVADEGDALVAGGVSQTPSYLSCKSETEVKKVFRQQLEVFMKKNVDFLIAEYFEHVEEAVWAVEALKASGKPVAATMCIGPEGDLHGVTPGQCAVRLVKAGASIVGVNCHFDPTISLQTVKLMKEGLQAAGLKAHLMSQPLAYHTPDCGKQGFIDLPEFPFGLEPRVATR.

The Hcy-binding domain maps to 11–278 (KGILERLNSG…FGLEPRVATR (268 aa)). N6-succinyllysine occurs at positions 40, 93, and 98. Zn(2+) is bound at residue C217. An N6-succinyllysine mark is found at K232 and K241.

In terms of assembly, homotetramer. Zn(2+) is required as a cofactor. As to expression, found exclusively in liver and kidney.

The protein resides in the cytoplasm. The protein localises to the cytosol. It localises to the nucleus. The enzyme catalyses L-homocysteine + glycine betaine = N,N-dimethylglycine + L-methionine. Its pathway is amine and polyamine degradation; betaine degradation; sarcosine from betaine: step 1/2. It functions in the pathway amino-acid biosynthesis; L-methionine biosynthesis via de novo pathway; L-methionine from L-homocysteine (BhmT route): step 1/1. With respect to regulation, inhibited by dimethylglycine and methylthioacetate. Functionally, involved in the regulation of homocysteine metabolism. Converts betaine and homocysteine to dimethylglycine and methionine, respectively. This reaction is also required for the irreversible oxidation of choline. This chain is Betaine--homocysteine S-methyltransferase 1, found in Sus scrofa (Pig).